A 603-amino-acid polypeptide reads, in one-letter code: Sorting nexin-41 (603 aa).

The disordered stretch occupies residues 1-36 (MNSFRESDEEDNNPFSGTNHLYASGIGAVPEGDDDF). The PX domain occupies 121–241 (AEGSLGALRI…QKFLNPEYIW (121 aa)). Residues Arg159, Ser161, Lys185, and Arg208 each contribute to the a 1,2-diacyl-sn-glycero-3-phospho-(1D-myo-inositol-3-phosphate) site.

The protein belongs to the sorting nexin family.

It localises to the endosome membrane. It is found in the endomembrane system. May be required for cytoplasm to vacuole transport (Cvt) and pexophagy. The sequence is that of Sorting nexin-41 (SNX41) from Eremothecium gossypii (strain ATCC 10895 / CBS 109.51 / FGSC 9923 / NRRL Y-1056) (Yeast).